The primary structure comprises 791 residues: Centrosomal protein of 89 kDa (791 aa).

The segment at 27–203 (APKPAVPRTP…HTQQKDVKHS (177 aa)) is disordered. A compositionally biased stretch (pro residues) spans 30-45 (PAVPRTPPPRSPNPSP). Position 50 is a phosphoserine (S50). Low complexity predominate over residues 50-62 (SALAAAILATTLT). Over residues 75-89 (SRSESDASDIEKDSF) the composition is skewed to basic and acidic residues. Residues 94-107 (ATTSELRLRQSWQN) show a composition bias toward polar residues. Basic and acidic residues predominate over residues 137 to 161 (RESESTWKDVGDGRDATYTVPHRDQ). Residues 181–190 (SDSSSSSSSS) show a composition bias toward low complexity. Coiled-coil stretches lie at residues 252-291 (SANQ…TEKA), 370-598 (LLAY…MGKE), and 670-737 (HRLK…SLLQ).

Its subcellular location is the cytoplasm. It localises to the cytosol. The protein localises to the cytoskeleton. The protein resides in the microtubule organizing center. It is found in the centrosome. Its subcellular location is the spindle pole. It localises to the centriole. The protein localises to the mitochondrion intermembrane space. Functionally, required for ciliogenesis. Also plays a role in mitochondrial metabolism where it may modulate complex IV activity. The chain is Centrosomal protein of 89 kDa (Cep89) from Mus musculus (Mouse).